Consider the following 575-residue polypeptide: Hemagglutinin-neuraminidase (575 aa).

Residues 1-10 (MDGDRSKRDS) show a composition bias toward basic and acidic residues. The tract at residues 1–25 (MDGDRSKRDSYWSTSPGGSTTKLVS) is disordered. Topologically, residues 1–37 (MDGDRSKRDSYWSTSPGGSTTKLVSDSERSGKVDTWL) are intravirion. The interval 10–14 (SYWST) is incorporation in virion. Over residues 11 to 24 (YWSTSPGGSTTKLV) the composition is skewed to polar residues. The chain crosses the membrane as a helical span at residues 38-58 (LILAFTQWALSIATVIICIVI). The involved in interaction with F protein stretch occupies residues 59–140 (AARQGYSMER…RQELTQLCDS (82 aa)). Residues 59–575 (AARQGYSMER…SIPKLCKAES (517 aa)) are Virion surface-facing. Asn77 carries N-linked (GlcNAc...) asparagine; by host glycosylation. Disulfide bonds link Cys192-Cys216, Cys258-Cys271, Cys357-Cys469, and Cys463-Cys473. The interval 254–259 (NRKSCS) is involved in neuraminidase activity. Residues Asn499 and Asn511 are each glycosylated (N-linked (GlcNAc...) asparagine; by host). Residues Cys535 and Cys544 are joined by a disulfide bond.

It belongs to the paramyxoviruses hemagglutinin-neuraminidase family. As to quaternary structure, homotetramer; composed of disulfide-linked homodimers. Interacts with F protein trimer. In terms of processing, N-glycosylated; glycans consist of a mixture of high mannose-type oligosaccharides and of complex-type oligosaccharides.

It localises to the virion membrane. It is found in the host cell membrane. It catalyses the reaction Hydrolysis of alpha-(2-&gt;3)-, alpha-(2-&gt;6)-, alpha-(2-&gt;8)- glycosidic linkages of terminal sialic acid residues in oligosaccharides, glycoproteins, glycolipids, colominic acid and synthetic substrates.. Attaches the virus to sialic acid-containing cell receptors and thereby initiating infection. Binding of HN protein to the receptor induces a conformational change that allows the F protein to trigger virion/cell membranes fusion. In terms of biological role, neuraminidase activity ensures the efficient spread of the virus by dissociating the mature virions from the neuraminic acid containing glycoproteins. The protein is Hemagglutinin-neuraminidase (HN) of Cavia cutleri (Guinea pig).